Here is a 103-residue protein sequence, read N- to C-terminus: MGKLTLLLLALLVWLQYSLWFGKNGIHDYSRVNDDVVAQQATNAKLKARNDQLFAEIDDLNGGQEAIEERARNELSMTKPGETFYRLVPDASKRAQTAGQNNR.

Residues 1 to 3 are Cytoplasmic-facing; it reads MGK. A helical membrane pass occupies residues 4–21; that stretch reads LTLLLLALLVWLQYSLWF. Topologically, residues 22–103 are periplasmic; the sequence is GKNGIHDYSR…RAQTAGQNNR (82 aa). The stretch at 33–62 forms a coiled coil; it reads NDDVVAQQATNAKLKARNDQLFAEIDDLNG.

The protein belongs to the FtsB family. In terms of assembly, part of a complex composed of FtsB, FtsL and FtsQ.

It is found in the cell inner membrane. Its function is as follows. Essential cell division protein. May link together the upstream cell division proteins, which are predominantly cytoplasmic, with the downstream cell division proteins, which are predominantly periplasmic. This is Cell division protein FtsB from Salmonella arizonae (strain ATCC BAA-731 / CDC346-86 / RSK2980).